The sequence spans 50 residues: Large ribosomal subunit protein eL39 (50 aa).

This sequence belongs to the eukaryotic ribosomal protein eL39 family.

The protein is Large ribosomal subunit protein eL39 (rpl39e) of Archaeoglobus fulgidus (strain ATCC 49558 / DSM 4304 / JCM 9628 / NBRC 100126 / VC-16).